Reading from the N-terminus, the 442-residue chain is Putative protein YjbI (442 aa).

This is Putative protein YjbI (yjbI) from Escherichia coli (strain K12).